A 472-amino-acid polypeptide reads, in one-letter code: Glutamine synthetase (472 aa).

Residues 17 to 101 (YDIKFVLLRF…LRCSIYEPST (85 aa)) form the GS beta-grasp domain. Residues 109–472 (PRSIAIRAEN…HPVEFEMYYA (364 aa)) enclose the GS catalytic domain. E134 and E136 together coordinate Mg(2+). E212 is a binding site for ATP. Residues E217 and E225 each contribute to the Mg(2+) site. Residues 269–270 (NG) and G270 contribute to the L-glutamate site. Residue H274 coordinates Mg(2+). ATP is bound by residues 276–278 (NMS) and S278. Residues R326, E332, and R344 each coordinate L-glutamate. Positions 344, 349, and 357 each coordinate ATP. Residue E362 participates in Mg(2+) binding. R364 contacts L-glutamate. At Y402 the chain carries O-AMP-tyrosine.

This sequence belongs to the glutamine synthetase family. Oligomer of 12 subunits arranged in the form of two hexameric ring. Requires Mg(2+) as cofactor.

It localises to the cytoplasm. The catalysed reaction is L-glutamate + NH4(+) + ATP = L-glutamine + ADP + phosphate + H(+). Its activity is regulated as follows. The activity of this enzyme could be controlled by adenylation under conditions of abundant glutamine. Functionally, catalyzes the ATP-dependent biosynthesis of glutamine from glutamate and ammonia. The protein is Glutamine synthetase of Pasteurella multocida (strain Pm70).